Reading from the N-terminus, the 566-residue chain is Sister chromatid cohesion protein 1 (566 aa).

Ser-161 bears the Phosphoserine mark. Ser-175 bears the Phosphoserine; by CDC5 mark. At Lys-210 the chain carries N6-acetyllysine; by ECO1. A Phosphoserine; by CDC5 modification is found at Ser-263. Ser-307 carries the phosphoserine modification. Positions 325 to 356 (SIQIDEETENSESIASSNTYKEERSNNLLTPQ) are disordered. Residue Thr-354 is modified to Phosphothreonine.

The protein belongs to the rad21 family. As to quaternary structure, interacts directly with IRR1/SCC3 in cohesin complex. Cohesin complexes are composed of the SMC1 and SMC3 heterodimer attached via their hinge domain, MCD1/SCC1 which link them, and IRR1, which interacts with MCD1. The cohesin complex also interacts with SCC2, which is required for its association with chromosomes. In terms of processing, cleaved by ESP1 at the onset of anaphase. Phosphorylated by CDC5/Polo-like kinase at the onset of anaphase. Phosphorylation takes places at proximity to cleavage sites and is required for an efficient cleavage by ESP1. Post-translationally, acetylated by ECO1.

The protein localises to the nucleus. The protein resides in the chromosome. Its subcellular location is the centromere. Cleavable component of the cohesin complex involved in chromosome cohesion during cell cycle. The cohesin complex is required for the cohesion of sister chromatids after DNA replication. The cohesin complex apparently forms a large proteinaceous ring within which sister chromatids can be trapped. At metaphase-anaphase transition, this protein is cleaved by ESP1 and dissociates from chromatin, allowing sister chromatids to segregate. The sequence is that of Sister chromatid cohesion protein 1 (MCD1) from Saccharomyces cerevisiae (strain ATCC 204508 / S288c) (Baker's yeast).